The chain runs to 1373 residues: DNA-directed RNA polymerase subunit beta (1373 aa).

The protein belongs to the RNA polymerase beta chain family. As to quaternary structure, the RNAP catalytic core consists of 2 alpha, 1 beta, 1 beta' and 1 omega subunit. When a sigma factor is associated with the core the holoenzyme is formed, which can initiate transcription.

The enzyme catalyses RNA(n) + a ribonucleoside 5'-triphosphate = RNA(n+1) + diphosphate. DNA-dependent RNA polymerase catalyzes the transcription of DNA into RNA using the four ribonucleoside triphosphates as substrates. This is DNA-directed RNA polymerase subunit beta from Rhodopseudomonas palustris (strain BisB18).